Consider the following 500-residue polypeptide: UDP-N-acetylmuramoyl-L-alanyl-D-glutamate--2,6-diaminopimelate ligase (500 aa).

Residue serine 38 participates in UDP-N-acetyl-alpha-D-muramoyl-L-alanyl-D-glutamate binding. Residue 118–124 (GTNGKTS) coordinates ATP. Residues 160–161 (TT), serine 187, and arginine 195 contribute to the UDP-N-acetyl-alpha-D-muramoyl-L-alanyl-D-glutamate site. Lysine 227 carries the post-translational modification N6-carboxylysine. Meso-2,6-diaminopimelate-binding positions include arginine 395, 419–422 (DNPR), glycine 471, and glutamate 475. Positions 419–422 (DNPR) match the Meso-diaminopimelate recognition motif motif.

It belongs to the MurCDEF family. MurE subfamily. Requires Mg(2+) as cofactor. Carboxylation is probably crucial for Mg(2+) binding and, consequently, for the gamma-phosphate positioning of ATP.

It localises to the cytoplasm. It carries out the reaction UDP-N-acetyl-alpha-D-muramoyl-L-alanyl-D-glutamate + meso-2,6-diaminopimelate + ATP = UDP-N-acetyl-alpha-D-muramoyl-L-alanyl-gamma-D-glutamyl-meso-2,6-diaminopimelate + ADP + phosphate + H(+). It functions in the pathway cell wall biogenesis; peptidoglycan biosynthesis. Its function is as follows. Catalyzes the addition of meso-diaminopimelic acid to the nucleotide precursor UDP-N-acetylmuramoyl-L-alanyl-D-glutamate (UMAG) in the biosynthesis of bacterial cell-wall peptidoglycan. The polypeptide is UDP-N-acetylmuramoyl-L-alanyl-D-glutamate--2,6-diaminopimelate ligase (Leptospira borgpetersenii serovar Hardjo-bovis (strain L550)).